A 220-amino-acid chain; its full sequence is MSSLSKEAVMVHEALLARGLETPLRGALLDRDTRKQRIAEHMTEIMNLLSLDLSDDSLAETPTRIAKMYVDEIFSGLDYANFPKITIIENKMKVDEMVTVRDITLTSTCEHHFVTIDGKATVAYIPKDGVIGLSKLNRIVQFFSQRPQVQERLTQQILVALQTLLGTNNVAVSIDAVHYCVKARGIRDATSATTTTSLGGLFKSSQNTRQEFLRAVRHHN.

Cys-109, His-112, and Cys-180 together coordinate Zn(2+).

The protein belongs to the GTP cyclohydrolase I family. As to quaternary structure, homomer.

The enzyme catalyses GTP + H2O = 7,8-dihydroneopterin 3'-triphosphate + formate + H(+). It functions in the pathway cofactor biosynthesis; 7,8-dihydroneopterin triphosphate biosynthesis; 7,8-dihydroneopterin triphosphate from GTP: step 1/1. The polypeptide is GTP cyclohydrolase 1 (Pectobacterium carotovorum subsp. carotovorum (strain PC1)).